The primary structure comprises 303 residues: Diaminopimelate epimerase (303 aa).

Asparagine 14 contributes to the substrate binding site. Residues 60–74 show a composition bias toward low complexity; the sequence is PVSSAGATADAAAGR. Positions 60-86 are disordered; the sequence is PVSSAGATADAAAGRPPQPSAGRPPQP. The span at 75–86 shows a compositional bias: pro residues; it reads PPQPSAGRPPQP. Asparagine 97 lines the substrate pocket. Residue cysteine 106 is the Proton donor of the active site. Residues 107–108, asparagine 178, asparagine 209, and 227–228 each bind substrate; these read GN and ER. Cysteine 236 functions as the Proton acceptor in the catalytic mechanism. 237–238 is a binding site for substrate; that stretch reads GS.

This sequence belongs to the diaminopimelate epimerase family. As to quaternary structure, homodimer.

It localises to the cytoplasm. The enzyme catalyses (2S,6S)-2,6-diaminopimelate = meso-2,6-diaminopimelate. The protein operates within amino-acid biosynthesis; L-lysine biosynthesis via DAP pathway; DL-2,6-diaminopimelate from LL-2,6-diaminopimelate: step 1/1. Catalyzes the stereoinversion of LL-2,6-diaminopimelate (L,L-DAP) to meso-diaminopimelate (meso-DAP), a precursor of L-lysine and an essential component of the bacterial peptidoglycan. In Acidothermus cellulolyticus (strain ATCC 43068 / DSM 8971 / 11B), this protein is Diaminopimelate epimerase.